The chain runs to 166 residues: Probable calcium-binding protein CML17 (166 aa).

EF-hand domains follow at residues 12–47, 48–83, 91–126, and 127–162; these read EQIN…LGVK, PSPD…ELLS, YTEE…LGHA, and LTVA…AAFD. Ca(2+)-binding residues include aspartate 25, asparagine 27, aspartate 29, serine 31, and glutamate 36. Positions 104, 106, 108, 115, 140, 142, 144, 146, and 151 each coordinate Ca(2+).

Potential calcium sensor. This chain is Probable calcium-binding protein CML17 (CML17), found in Arabidopsis thaliana (Mouse-ear cress).